A 117-amino-acid polypeptide reads, in one-letter code: Small ribosomal subunit protein uS17 (117 aa).

The disordered stretch occupies residues 97-117 (AEGLAAAHAGEPETESAATDA).

The protein belongs to the universal ribosomal protein uS17 family. Part of the 30S ribosomal subunit.

Its function is as follows. One of the primary rRNA binding proteins, it binds specifically to the 5'-end of 16S ribosomal RNA. This chain is Small ribosomal subunit protein uS17, found in Rhodopirellula baltica (strain DSM 10527 / NCIMB 13988 / SH1).